A 361-amino-acid chain; its full sequence is 3-dehydroquinate synthase (361 aa).

NAD(+) is bound by residues 72–77, 130–131, lysine 142, and lysine 151; these read SGEKEK and TT. Residues glutamate 184, histidine 247, and histidine 264 each contribute to the Zn(2+) site.

The protein belongs to the sugar phosphate cyclases superfamily. Dehydroquinate synthase family. It depends on Co(2+) as a cofactor. Requires Zn(2+) as cofactor. The cofactor is NAD(+).

The protein resides in the cytoplasm. The enzyme catalyses 7-phospho-2-dehydro-3-deoxy-D-arabino-heptonate = 3-dehydroquinate + phosphate. It participates in metabolic intermediate biosynthesis; chorismate biosynthesis; chorismate from D-erythrose 4-phosphate and phosphoenolpyruvate: step 2/7. Catalyzes the conversion of 3-deoxy-D-arabino-heptulosonate 7-phosphate (DAHP) to dehydroquinate (DHQ). The sequence is that of 3-dehydroquinate synthase from Bacillus cereus (strain ZK / E33L).